The following is a 165-amino-acid chain: MMATYEGCYTDAQALRIAVVVARFNDLVTGKLLSGCLDCLARHGVDTSSNSEQLDVAWVPGAFELPIVTQTLALSGQYQVVITLGAVIRGDTPHFDVVVAEASKGIASVSRETGVPVIFGVLTTDTMQQALERAGIKSNLGWSYGLQALEMGSLMAVLRSATSAS.

5-amino-6-(D-ribitylamino)uracil-binding positions include Phe-24, 62-64, and 86-88; these read AFE and AVI. 91-92 is a binding site for (2S)-2-hydroxy-3-oxobutyl phosphate; sequence DT. His-94 functions as the Proton donor in the catalytic mechanism. A 5-amino-6-(D-ribitylamino)uracil-binding site is contributed by Phe-119. Residue Arg-133 coordinates (2S)-2-hydroxy-3-oxobutyl phosphate.

The protein belongs to the DMRL synthase family.

The catalysed reaction is (2S)-2-hydroxy-3-oxobutyl phosphate + 5-amino-6-(D-ribitylamino)uracil = 6,7-dimethyl-8-(1-D-ribityl)lumazine + phosphate + 2 H2O + H(+). The protein operates within cofactor biosynthesis; riboflavin biosynthesis; riboflavin from 2-hydroxy-3-oxobutyl phosphate and 5-amino-6-(D-ribitylamino)uracil: step 1/2. In terms of biological role, catalyzes the formation of 6,7-dimethyl-8-ribityllumazine by condensation of 5-amino-6-(D-ribitylamino)uracil with 3,4-dihydroxy-2-butanone 4-phosphate. This is the penultimate step in the biosynthesis of riboflavin. The sequence is that of 6,7-dimethyl-8-ribityllumazine synthase from Prochlorococcus marinus (strain MIT 9313).